The primary structure comprises 56 residues: MQTQEQSQKKKQKAVFGIYMDKDLKTRLKVYCAKNNLQLTQAIEEAIKEYLQKRNG.

This is an uncharacterized protein from Saccharolobus islandicus (Sulfolobus islandicus).